The primary structure comprises 488 residues: Glutamyl-tRNA(Gln) amidotransferase subunit A (488 aa).

Residues K77 and S152 each act as charge relay system in the active site. S176 serves as the catalytic Acyl-ester intermediate.

It belongs to the amidase family. GatA subfamily. Heterotrimer of A, B and C subunits.

It catalyses the reaction L-glutamyl-tRNA(Gln) + L-glutamine + ATP + H2O = L-glutaminyl-tRNA(Gln) + L-glutamate + ADP + phosphate + H(+). Allows the formation of correctly charged Gln-tRNA(Gln) through the transamidation of misacylated Glu-tRNA(Gln) in organisms which lack glutaminyl-tRNA synthetase. The reaction takes place in the presence of glutamine and ATP through an activated gamma-phospho-Glu-tRNA(Gln). The polypeptide is Glutamyl-tRNA(Gln) amidotransferase subunit A (Streptococcus pyogenes serotype M1).